The primary structure comprises 224 residues: Flagellar L-ring protein (224 aa).

An N-terminal signal peptide occupies residues M1–A15. C16 carries the N-palmitoyl cysteine lipid modification. C16 carries the S-diacylglycerol cysteine lipid modification.

This sequence belongs to the FlgH family. As to quaternary structure, the basal body constitutes a major portion of the flagellar organelle and consists of four rings (L,P,S, and M) mounted on a central rod.

It is found in the cell outer membrane. The protein localises to the bacterial flagellum basal body. In terms of biological role, assembles around the rod to form the L-ring and probably protects the motor/basal body from shearing forces during rotation. The protein is Flagellar L-ring protein of Shewanella sp. (strain ANA-3).